Here is a 251-residue protein sequence, read N- to C-terminus: Carboxy-S-adenosyl-L-methionine synthase (251 aa).

Residues tyrosine 48, 73–75 (GCS), asparagine 140, and arginine 207 contribute to the S-adenosyl-L-methionine site.

Belongs to the class I-like SAM-binding methyltransferase superfamily. Cx-SAM synthase family. Homodimer.

It carries out the reaction prephenate + S-adenosyl-L-methionine = carboxy-S-adenosyl-L-methionine + 3-phenylpyruvate + H2O. Catalyzes the conversion of S-adenosyl-L-methionine (SAM) to carboxy-S-adenosyl-L-methionine (Cx-SAM). This chain is Carboxy-S-adenosyl-L-methionine synthase, found in Hydrogenovibrio crunogenus (strain DSM 25203 / XCL-2) (Thiomicrospira crunogena).